A 503-amino-acid chain; its full sequence is Annexin A11 (503 aa).

Composition is skewed to pro residues over residues 1–17, 80–145, and 155–169; these read MSYP…PPAP, GYPP…PYPG, and SPVP…PSYP. Disordered regions lie at residues 1–35 and 56–178; these read MSYP…MPPI and AANM…GTVT. 4 Annexin repeats span residues 198 to 269, 270 to 341, 353 to 425, and 429 to 500; these read FDPL…ALMK, TPIL…SLSQ, SLVQ…AVVK, and NTPA…KICG. Residues lysine 246 and lysine 253 each carry the N6-acetyllysine modification. Residue lysine 477 is modified to N6-acetyllysine.

Belongs to the annexin family. As to quaternary structure, interacts with PDCD6 in a calcium-dependent manner. Interacts with KIF23 during cytokinesis. Interacts with S100A6.

It is found in the cytoplasm. It localises to the melanosome. Its subcellular location is the nucleus envelope. The protein localises to the nucleus. The protein resides in the nucleoplasm. It is found in the cytoskeleton. It localises to the spindle. Required for midbody formation and completion of the terminal phase of cytokinesis. Binds specifically to calcyclin in a calcium-dependent manner. The sequence is that of Annexin A11 (ANXA11) from Oryctolagus cuniculus (Rabbit).